Reading from the N-terminus, the 656-residue chain is Receptor-type tyrosine-protein phosphatase R (656 aa).

Residues 1 to 23 form the signal peptide; it reads MRRAVGFPALCLLLNLHAAGCFS. O-linked (Xyl...) (chondroitin sulfate) serine glycosylation is present at Ser-23. The Extracellular segment spans residues 24-226; sequence RNNDHFLAIR…EADKIWSKEG (203 aa). Asn-128 is a glycosylation site (N-linked (GlcNAc...) asparagine). The helical transmembrane segment at 227-247 threads the bilayer; sequence FYAVVIFLSIFIIIVTCLMII. At 248 to 656 the chain is on the cytoplasmic side; it reads YRLKERLQLS…ESRLSPETVE (409 aa). Residues 269 to 289 are disordered; it reads HLSPIARQQAQSEAKTTHSMV. Position 271 is a phosphoserine (Ser-271). Over residues 274-289 the composition is skewed to polar residues; sequence ARQQAQSEAKTTHSMV. Ser-338 is modified (phosphoserine; by PKA). A Tyrosine-protein phosphatase domain is found at 392–646; the sequence is LQSEFMEIPM…EFVHHALCLF (255 aa). Substrate is bound by residues Asp-553, 587–593, and Gln-631; that span reads CSAGIGR. The Phosphocysteine intermediate role is filled by Cys-587.

The protein belongs to the protein-tyrosine phosphatase family. Receptor class 7 subfamily. As to quaternary structure, interacts with MAPKs. As to expression, expressed in the heart, brain, spleen, lung, liver, skeletal muscle, kidney and testis. Isoform alpha is expressed throughout the granular layer of the cerebellar but not within the Purkinje cells, also in the villi of the ileum and jejunum and both the villi and crypts of the duodenum. Isoform beta is expressed only in the Purkinje cells. Isoform gamma is expressed throughout the brain, the villi and crypts of the duodenum, jejunum and ileum and expressed at low levels in the proximal colon.

It is found in the cell membrane. It localises to the cytoplasm. It catalyses the reaction O-phospho-L-tyrosyl-[protein] + H2O = L-tyrosyl-[protein] + phosphate. Its function is as follows. Sequesters mitogen-activated protein kinases (MAPKs) such as MAPK1, MAPK3 and MAPK14 in the cytoplasm in an inactive form. The MAPKs bind to a dephosphorylated kinase interacting motif, phosphorylation of which by the protein kinase A complex releases the MAPKs for activation and translocation into the nucleus. Isoform gamma may have a role in patterning and cellular proliferation of skeletal elements in the precartilaginous/cartilaginous skeleton. This Mus musculus (Mouse) protein is Receptor-type tyrosine-protein phosphatase R (Ptprr).